We begin with the raw amino-acid sequence, 83 residues long: RNA-binding protein Hfq (83 aa).

In terms of domain architecture, Sm spans 9-68 (DPYLNALRKERIPVSIFLVNGIKLQGQIESFDQFVILLKNTVSQMVYKHAISTVVPARNV).

The protein belongs to the Hfq family. As to quaternary structure, homohexamer.

Functionally, RNA chaperone that binds small regulatory RNA (sRNAs) and mRNAs to facilitate mRNA translational regulation in response to envelope stress, environmental stress and changes in metabolite concentrations. Also binds with high specificity to tRNAs. The polypeptide is RNA-binding protein Hfq (Hahella chejuensis (strain KCTC 2396)).